We begin with the raw amino-acid sequence, 364 residues long: MGVTGILQLPRDRFKRTSFFLWVIILFQRTFSIPLGVIHNSTLQVSDVDKLVCRDKLSSTNQLRSVGLNLEGNGVATDVPSATKRWGFRSGVPPKVVNYEAGEWAENCYNLEIKKPDGSECLPAAPDGIRGFPRCRYVHKVSGTGPCAGDFAFHKEGAFFLYDRLASTVIYRGTTFAEGVVAFLILPQAKKDFFSSHPLREPVNATEDPSSGYYSTTIRYQATGFGTNETEYLFEVDNLTYVQLESRFTPQFLLQLNETRYTSGKRSNTTGKLIWKVNPEIDTTIGEWAFWETKKTSLEKFAVKSCLSQLYQTEPKTSVVRVRRELLPTQGPTQQLKTTKSWLQKIPLQWFKCTVKEGKLQCRI.

Positions 1-32 (MGVTGILQLPRDRFKRTSFFLWVIILFQRTFS) are cleaved as a signal peptide. An N-linked (GlcNAc...) asparagine; by host glycan is attached at Asn40. 2 cysteine pairs are disulfide-bonded: Cys108–Cys135 and Cys121–Cys147. N-linked (GlcNAc...) asparagine; by host glycosylation is found at Asn204, Asn228, Asn238, Asn257, and Asn268.

Belongs to the filoviruses glycoprotein family. As to quaternary structure, homodimer; disulfide-linked. The homodimers are linked by two disulfide bonds in a parallel orientation. Monomer. This precursor is processed into mature sGP and delta-peptide by host furin or furin-like proteases. The cleavage site corresponds to the furin optimal cleavage sequence [KR]-X-[KR]-R. Post-translationally, N-glycosylated. In terms of processing, O-glycosylated.

Its subcellular location is the secreted. In terms of biological role, seems to possess an anti-inflammatory activity as it can reverse the barrier-decreasing effects of TNF alpha. Might therefore contribute to the lack of inflammatory reaction seen during infection in spite the of extensive necrosis and massive virus production. Does not seem to be involved in activation of primary macrophages. Does not seem to interact specifically with neutrophils. Functionally, viroporin that permeabilizes mammalian cell plasma membranes. It acts by altering permeation of ionic compounds and small molecules. This activity may lead to viral enterotoxic activity. The sequence is that of Pre-small/secreted glycoprotein (GP) from Zaire ebolavirus (strain Gabon-94) (ZEBOV).